Consider the following 262-residue polypeptide: Acetylglutamate kinase (262 aa).

Substrate is bound by residues 46–47 (GG), Arg68, and Asn160.

This sequence belongs to the acetylglutamate kinase family. ArgB subfamily.

Its subcellular location is the cytoplasm. It carries out the reaction N-acetyl-L-glutamate + ATP = N-acetyl-L-glutamyl 5-phosphate + ADP. It participates in amino-acid biosynthesis; L-arginine biosynthesis; N(2)-acetyl-L-ornithine from L-glutamate: step 2/4. Functionally, catalyzes the ATP-dependent phosphorylation of N-acetyl-L-glutamate. The polypeptide is Acetylglutamate kinase (Shewanella amazonensis (strain ATCC BAA-1098 / SB2B)).